Consider the following 926-residue polypeptide: G-protein coupled receptor family C group 6 member A (926 aa).

The signal sequence occupies residues 1–18; that stretch reads MAFLIILITCFVIILATS. Residues 19–594 are Extracellular-facing; the sequence is QPCQTPDDFV…EYLNWNDSLA (576 aa). N-linked (GlcNAc...) asparagine glycans are attached at residues N121, N259, N332, N378, N452, N555, N567, and N590. A helical transmembrane segment spans residues 595 to 615; that stretch reads ILLLILSLLGIIFVLVVGIIF. Residues 616–631 are Cytoplasmic-facing; it reads TRNLNTPVVKSSGGLR. A helical membrane pass occupies residues 632-652; that stretch reads VCYVILLCHFLNFASTSFFIG. Topologically, residues 653 to 669 are extracellular; it reads EPQDFTCKTRQTMFGVS. A helical transmembrane segment spans residues 670–690; sequence FTLCISCILTKSLKILLAFSF. The Cytoplasmic segment spans residues 691–704; sequence DPKLQKFLKCLYRP. A helical membrane pass occupies residues 705–725; that stretch reads ILIIFTCTGIQVVICTLWLIF. Over 726 to 748 the chain is Extracellular; that stretch reads AAPTVEVNVSLPRVIILECEEGS. Residue N733 is glycosylated (N-linked (GlcNAc...) asparagine). The chain crosses the membrane as a helical span at residues 749–769; sequence ILAFGTMLGYIAILAFICFIF. Over 770–782 the chain is Cytoplasmic; it reads AFKGKYENYNEAK. The helical transmembrane segment at 783–803 threads the bilayer; the sequence is FITFGMLIYFIAWITFIPIYA. The Extracellular portion of the chain corresponds to 804–810; sequence TTFGKYV. A helical membrane pass occupies residues 811 to 831; that stretch reads PAVEIIVILISNYGILYCTFI. Residues 832–926 are Cytoplasmic-facing; the sequence is PKCYVIICKQ…TLPRKRMSSI (95 aa).

Belongs to the G-protein coupled receptor 3 family. Homodimer; disulfide-linked. In terms of tissue distribution, isoform 1 is expressed at high level in brain, skeletal muscle, testis, bone, calvaria, osteoblasts and leukocytes. Expressed at intermediate level in liver, heart, kidney and spleen. Expressed at low level in lung, pancreas, placenta and ovary. Not detected in thymus, prostate, small intestine, tongue and colon. Isoform 1 and isoform 2 are expressed in kidney at the same level. Isoform 2 is expressed at lower level than isoform 1 in the other tissues.

It is found in the cell membrane. Functionally, receptor activated by multiple ligands, including osteocalcin (BGLAP), basic amino acids, and various cations. Activated by amino acids with a preference for basic amino acids such as L-Lys, L-Arg and L-ornithine but also by small and polar amino acids. The L-alpha amino acids respond is augmented by divalent cations Ca(2+) and Mg(2+). Seems to act through a G(q)/G(11) and G(i)-coupled pathway. Regulates testosterone production by acting as a ligand for uncarboxylated osteocalcin hormone: osteocalcin-binding at the surface of Leydig cells initiates a signaling response that promotes the expression of enzymes required for testosterone synthesis in a CREB-dependent manner. Mediates the non-genomic effects of androgens in multiple tissue. May coordinate nutritional and hormonal anabolic signals through the sensing of extracellular amino acids, osteocalcin, divalent ions and its responsiveness to anabolic steroids. In Homo sapiens (Human), this protein is G-protein coupled receptor family C group 6 member A (GPRC6A).